Here is a 283-residue protein sequence, read N- to C-terminus: Homeobox-leucine zipper protein HAT2 (283 aa).

The segment at 64–134 (VNCEEDTGVS…GETSRKKLRL (71 aa)) is disordered. Positions 73 to 84 (SSPNSTISSTIS) are enriched in low complexity. The homeobox DNA-binding region spans 127–186 (TSRKKLRLSKDQSAFLEETFKEHNTLNPKQKLALAKKLNLTARQVEVWFQNRRARTKLKQ). Positions 194–215 (LKRCVEKLTEENRRLQKEAMEL) are leucine-zipper.

It belongs to the HD-ZIP homeobox family. Class II subfamily. In terms of assembly, interacts with RBR1.

Its subcellular location is the nucleus. Probable transcription factor that plays a role in auxin-mediated morphogenesis. Negatively regulates lateral root elongation. This Arabidopsis thaliana (Mouse-ear cress) protein is Homeobox-leucine zipper protein HAT2 (HAT2).